The chain runs to 133 residues: Phosphoribosyl-AMP cyclohydrolase (133 aa).

Asp77 is a Mg(2+) binding site. Cys78 serves as a coordination point for Zn(2+). The Mg(2+) site is built by Asp79 and Asp81. Cys95 and Cys102 together coordinate Zn(2+).

The protein belongs to the PRA-CH family. In terms of assembly, homodimer. The cofactor is Mg(2+). It depends on Zn(2+) as a cofactor.

Its subcellular location is the cytoplasm. It catalyses the reaction 1-(5-phospho-beta-D-ribosyl)-5'-AMP + H2O = 1-(5-phospho-beta-D-ribosyl)-5-[(5-phospho-beta-D-ribosylamino)methylideneamino]imidazole-4-carboxamide. Its pathway is amino-acid biosynthesis; L-histidine biosynthesis; L-histidine from 5-phospho-alpha-D-ribose 1-diphosphate: step 3/9. In terms of biological role, catalyzes the hydrolysis of the adenine ring of phosphoribosyl-AMP. The chain is Phosphoribosyl-AMP cyclohydrolase from Azotobacter vinelandii (strain DJ / ATCC BAA-1303).